The chain runs to 338 residues: Ketol-acid reductoisomerase (NADP(+)) (338 aa).

The KARI N-terminal Rossmann domain maps to 1–181 (MNVFYDKDAD…GGGRAGIIET (181 aa)). NADP(+) is bound by residues 24 to 27 (YGSQ), Arg47, and Ser52. His107 is a catalytic residue. Gly133 contributes to the NADP(+) binding site. In terms of domain architecture, KARI C-terminal knotted spans 182-327 (NFREETETDL…AKLRAMMPWI (146 aa)). The Mg(2+) site is built by Asp190, Glu194, Glu226, and Glu230. A substrate-binding site is contributed by Ser251.

Belongs to the ketol-acid reductoisomerase family. The cofactor is Mg(2+).

It carries out the reaction (2R)-2,3-dihydroxy-3-methylbutanoate + NADP(+) = (2S)-2-acetolactate + NADPH + H(+). The enzyme catalyses (2R,3R)-2,3-dihydroxy-3-methylpentanoate + NADP(+) = (S)-2-ethyl-2-hydroxy-3-oxobutanoate + NADPH + H(+). It participates in amino-acid biosynthesis; L-isoleucine biosynthesis; L-isoleucine from 2-oxobutanoate: step 2/4. Its pathway is amino-acid biosynthesis; L-valine biosynthesis; L-valine from pyruvate: step 2/4. In terms of biological role, involved in the biosynthesis of branched-chain amino acids (BCAA). Catalyzes an alkyl-migration followed by a ketol-acid reduction of (S)-2-acetolactate (S2AL) to yield (R)-2,3-dihydroxy-isovalerate. In the isomerase reaction, S2AL is rearranged via a Mg-dependent methyl migration to produce 3-hydroxy-3-methyl-2-ketobutyrate (HMKB). In the reductase reaction, this 2-ketoacid undergoes a metal-dependent reduction by NADPH to yield (R)-2,3-dihydroxy-isovalerate. In Burkholderia multivorans (strain ATCC 17616 / 249), this protein is Ketol-acid reductoisomerase (NADP(+)).